A 350-amino-acid polypeptide reads, in one-letter code: Ion-translocating oxidoreductase complex subunit D (350 aa).

Transmembrane regions (helical) follow at residues 36 to 56 (FYFF…IALL), 68 to 88 (PIIS…IGVS), 89 to 109 (IPSI…IVIV), and 120 to 140 (IFNP…VQMT). T185 is subject to FMN phosphoryl threonine. A run of 5 helical transmembrane segments spans residues 212–232 (GFGV…LAML), 239–259 (WQIS…GYLL), 265–285 (IGPL…FIAT), 291–311 (ATSV…VYVI), and 315–335 (GGYP…APFI).

This sequence belongs to the NqrB/RnfD family. As to quaternary structure, the complex is composed of six subunits: RnfA, RnfB, RnfC, RnfD, RnfE and RnfG. It depends on FMN as a cofactor.

The protein localises to the cell inner membrane. Functionally, part of a membrane-bound complex that couples electron transfer with translocation of ions across the membrane. This Shewanella piezotolerans (strain WP3 / JCM 13877) protein is Ion-translocating oxidoreductase complex subunit D.